Here is a 324-residue protein sequence, read N- to C-terminus: MSVSLQSRPTTIACLLGPTASGKTAAALALAARRPIEIVSVDSALVYRDMDIGTAKPTRDERARVPHHLIDIIDPADSYSAASFRADTLRLIGEIAARGNTPLLAGGTMLYYKALTQGLNDLPGADPALRAELDADAARDGWPALHARLARIDPATAARLAPNDAQRIQRALEVCMLSGQPMSALLAAPRAADDAAAAYRFVPVALEPSDRAVLHARIAQRFDAMLEAGFIDEVERLRRREDLHLGLPSMRCVGYRQAWEYLDGAIDYRTMRDKGIFATRQLCKRQITWLRAMPERIVVDCIARDSTAQALDALERVLDGLAAR.

17 to 24 (GPTASGKT) contacts ATP. 19-24 (TASGKT) is a binding site for substrate. Interaction with substrate tRNA regions lie at residues 42–45 (DSAL), 166–170 (QRIQR), 251–256 (RCVGYR), and 284–291 (KRQITWLR).

This sequence belongs to the IPP transferase family. As to quaternary structure, monomer. Mg(2+) serves as cofactor.

It catalyses the reaction adenosine(37) in tRNA + dimethylallyl diphosphate = N(6)-dimethylallyladenosine(37) in tRNA + diphosphate. Catalyzes the transfer of a dimethylallyl group onto the adenine at position 37 in tRNAs that read codons beginning with uridine, leading to the formation of N6-(dimethylallyl)adenosine (i(6)A). This Burkholderia vietnamiensis (strain G4 / LMG 22486) (Burkholderia cepacia (strain R1808)) protein is tRNA dimethylallyltransferase.